A 523-amino-acid chain; its full sequence is BTB/POZ domain-containing protein 3 (523 aa).

The ANK repeat unit spans residues Phe-85–Arg-114. 2 consecutive BTB domains span residues Thr-167–Tyr-223 and His-306–Pro-373.

As to quaternary structure, interacts with cul3. Post-translationally, ubiquitinated and targeted for cul3-dependent degradation.

The protein resides in the cytoplasm. It functions in the pathway protein modification; protein ubiquitination. Its function is as follows. Probable substrate-specific adapter of an E3 ubiquitin-protein ligase complex which mediates the ubiquitination and subsequent proteasomal degradation of target proteins. The chain is BTB/POZ domain-containing protein 3 (btb3) from Schizosaccharomyces pombe (strain 972 / ATCC 24843) (Fission yeast).